We begin with the raw amino-acid sequence, 1377 residues long: DNA-directed RNA polymerase subunit beta (1377 aa).

This sequence belongs to the RNA polymerase beta chain family. In terms of assembly, the RNAP catalytic core consists of 2 alpha, 1 beta, 1 beta' and 1 omega subunit. When a sigma factor is associated with the core the holoenzyme is formed, which can initiate transcription.

It catalyses the reaction RNA(n) + a ribonucleoside 5'-triphosphate = RNA(n+1) + diphosphate. Functionally, DNA-dependent RNA polymerase catalyzes the transcription of DNA into RNA using the four ribonucleoside triphosphates as substrates. The polypeptide is DNA-directed RNA polymerase subunit beta (Orientia tsutsugamushi (strain Boryong) (Rickettsia tsutsugamushi)).